A 529-amino-acid polypeptide reads, in one-letter code: Probable E3 ubiquitin-protein ligase MGRN1 (529 aa).

Residues 275–314 (ECVVCLSDLRDTLILPCRHLCLCNACADTLRYQANNCPIC) form an RING-type zinc finger. Disordered regions lie at residues 341–362 (SPVL…IPPG) and 396–529 (EMGD…VEEC). Polar residues-rich tracts occupy residues 449–463 (AQPQ…SPSE) and 477–487 (NSGSESRSLGV). Over residues 501-511 (SSLSQSESDPS) the composition is skewed to low complexity. Residues 520-529 (ESWSTAVEEC) are compositionally biased toward polar residues.

Autoubiquitinated in vitro.

It carries out the reaction S-ubiquitinyl-[E2 ubiquitin-conjugating enzyme]-L-cysteine + [acceptor protein]-L-lysine = [E2 ubiquitin-conjugating enzyme]-L-cysteine + N(6)-ubiquitinyl-[acceptor protein]-L-lysine.. The protein operates within protein modification; protein ubiquitination. Functionally, E3 ubiquitin-protein ligase. Also acts as a negative regulator of hedgehog signaling. The chain is Probable E3 ubiquitin-protein ligase MGRN1 (mgrn1) from Danio rerio (Zebrafish).